Reading from the N-terminus, the 359-residue chain is Peptide chain release factor 1 (359 aa).

Gln236 carries the post-translational modification N5-methylglutamine.

Belongs to the prokaryotic/mitochondrial release factor family. Methylated by PrmC. Methylation increases the termination efficiency of RF1.

Its subcellular location is the cytoplasm. Functionally, peptide chain release factor 1 directs the termination of translation in response to the peptide chain termination codons UAG and UAA. In Streptococcus pneumoniae (strain Hungary19A-6), this protein is Peptide chain release factor 1.